Here is a 276-residue protein sequence, read N- to C-terminus: Stathmin domain-containing protein 1 (276 aa).

Disordered regions lie at residues 1 to 40 (MGCG…ENCS), 61 to 106 (VQMG…RERQ), and 226 to 250 (GFEP…ATLI). Gly2 is lipidated: N-myristoyl glycine. Polar residues-rich tracts occupy residues 68-78 (GTISENSPSPS) and 87-100 (DLVT…PQSL). Positions 118–244 (QGIIQSHSKV…GKPLKRKKSK (127 aa)) constitute an SLD domain.

This chain is Stathmin domain-containing protein 1 (STMND1), found in Homo sapiens (Human).